Consider the following 211-residue polypeptide: Probable GTP-binding protein EngB (211 aa).

An EngB-type G domain is found at 21-197 (TAPEFAFLGR…WGEIHRVAAE (177 aa)). GTP is bound by residues 29–36 (GRSNVGKS), 55–59 (GRTRA), 80–83 (DLPG), 147–150 (TKAD), and 176–178 (CSA). Positions 36 and 57 each coordinate Mg(2+).

The protein belongs to the TRAFAC class TrmE-Era-EngA-EngB-Septin-like GTPase superfamily. EngB GTPase family. It depends on Mg(2+) as a cofactor.

Its function is as follows. Necessary for normal cell division and for the maintenance of normal septation. The chain is Probable GTP-binding protein EngB from Acidobacterium capsulatum (strain ATCC 51196 / DSM 11244 / BCRC 80197 / JCM 7670 / NBRC 15755 / NCIMB 13165 / 161).